A 546-amino-acid chain; its full sequence is Probable ATP-dependent RNA helicase DDX56 (546 aa).

The Q motif motif lies at 7–35 (LGFEHMGLDPRLLQAVTDLGWSRPTLIQE). Residues 38–218 (IPLALEGKDL…ELVLHNPVTL (181 aa)) form the Helicase ATP-binding domain. 51–58 (ARTGSGKT) contributes to the ATP binding site. Residue serine 126 is modified to Phosphoserine. Threonine 141 is subject to Phosphothreonine. Positions 166-169 (DEAD) match the DEAD box motif. The region spanning 230–424 (QLQQFQVVCE…PYQFQMEEIE (195 aa)) is the Helicase C-terminal domain. Disordered stretches follow at residues 324–344 (VKGK…PESG) and 508–546 (RKKR…AKPS). 3 stretches are compositionally biased toward basic residues: residues 325–334 (KGKRRGRGSK), 508–524 (RKKR…KKVK), and 532–546 (FKHR…AKPS).

Belongs to the DEAD box helicase family. DDX56/DBP9 subfamily. In terms of assembly, may form homooligomeric complexes. Interacts with IRF3. Interacts with OCT4 and POU5F1.

Its subcellular location is the nucleus. It localises to the nucleolus. The enzyme catalyses ATP + H2O = ADP + phosphate + H(+). In terms of biological role, nucleolar RNA helicase that plays a role in various biological processes including innate immunity, ribosome biogenesis or nucleolus organization. Plays an essential role in maintaining nucleolar integrity in planarian stem cells. Maintains embryonic stem cells proliferation by conventional regulation of ribosome assembly and interaction with OCT4 and POU5F1 complex. Regulates antiviral innate immunity by inhibiting the virus-triggered signaling nuclear translocation of IRF3. Mechanistically, acts by disrupting the interaction between IRF3 and importin IPO5. May play a role in later stages of the processing of the pre-ribosomal particles leading to mature 60S ribosomal subunits. Has intrinsic ATPase activity. This chain is Probable ATP-dependent RNA helicase DDX56 (Ddx56), found in Mus musculus (Mouse).